The primary structure comprises 115 residues: Con-Ins T1B (115 aa).

The N-terminal stretch at 1 to 24 (MTTSFYFLLMALGLLLYVCQSSFG) is a signal peptide. A propeptide spanning residues 25-29 (NQHTR) is cleaved from the precursor. Position 34 is a 4-hydroxyproline; partial (P34). Intrachain disulfides connect C38–C101, C50–C114, and C100–C105. Residues 52–94 (RKRNDAGKKRGQASPLWQRGGSLSMLKARAKRNEAFHLQRAHR) constitute a propeptide, c peptide. Position 98 is a 4-carboxyglutamate (E98). P104 carries the post-translational modification 4-hydroxyproline; partial. Residue E109 is modified to 4-carboxyglutamate; partial. Cysteine amide is present on C114.

Belongs to the insulin family. As to quaternary structure, heterodimer of A and B chains; disulfide-linked. As to expression, expressed by the venom gland.

The protein resides in the secreted. This venom insulin, from a fish-hunting cone snail, facilitates prey capture by rapidly inducing hypoglycemic shock. It is one of the smallest known insulin found in nature and lacks the C-terminal segment of the B chain that, in human insulin, mediates engagement of the insulin receptor (INSR) and assembly of the hormone's hexameric storage form. Despite lacking this segment, it both binds and activates human insulin receptor (long isoform (HIR-B) of INSR) with a high potency (EC(50)=12.0 nM). In vivo, intraperitoneal injection of this peptide into zebrafish lowers blood glucose with a lower potency than human insulin. In addition, when applied to water, this peptide reduces overall locomotor activity of zebrafish larvae, observed as a significant decrease in the percentage of time spent swimming and movement frequency. When tested on a mouse model of diabetes, this insulin also lowers blood glucose with a 10-fold lower potency than human insulin. The chain is Con-Ins T1B from Conus tulipa (Fish-hunting cone snail).